The chain runs to 1977 residues: Echinoderm microtubule-associated protein-like 5 (1977 aa).

11 WD repeats span residues 59-100 (GHSD…TVSV), 104-145 (VHTH…MLSM), 148-187 (GHTDRIFDISWDLYQPNKLVSCGVKHIKFWSLCGNALTPK), 195-233 (GDLQTILCLACARDELTYSGALNGDIYVWKGINLIRTIQ), 235-273 (AHTAGIFSMNACEEGFATGGRDGCIRLWDLTFKPITVID), 280-321 (GYKG…LIMQ), 323-362 (HCEGELWALAVHPTKPLAVTGSDDRSVRIWSLVDHALIAR), 364-403 (NMDEPIRCAAVNADGVHLALGMKDGSLTVLRVRDMTEVVH), 406-445 (DRKEAIHELKYSPDGTYLAVGCNDSSVDIYGVAQRYKKVG), 449-488 (GSLSFITHLDWSSDSKYLQTNDGSGKRLLYKMPGGKEVTS), and 561-601 (GHSA…KLKD). Residues 609–629 (ESLTESNSDESDSDLSDVPEL) form a disordered region. Positions 615–629 (NSDESDSDLSDVPEL) are enriched in acidic residues. WD repeat units follow at residues 725 to 766 (GHDD…PLSI), 770 to 811 (YHQY…KLSV), 814 to 853 (GSKDKIFVVKMNPYVPDKLITAGIKHMKFWRRAGGGLIGR), 861 to 900 (GKNDTMMCAVYGWTEEMAFSGTSTGDVCIWRDVFLVKTVK), 901 to 940 (AHDGPVFSMHALEKGFVTGGKDGVVALWDDSFERCLKTYA), 996 to 1035 (HMEGEVWGLATHPYLPICATVSDDKTLRIWDLSPSHCMLA), 1038 to 1077 (KLKKGGRCCCFSPDGKALAVGLNDGSFLMANADTLEDLVS), 1080 to 1120 (HRKD…RVGV), and 1236 to 1276 (AHST…HREK). Disordered regions lie at residues 1274–1299 (REKKNCDSEESDTDSEEDGGYDSDVT) and 1323–1363 (PHLQ…NVGK). A compositionally biased stretch (acidic residues) spans 1281–1294 (SEESDTDSEEDGGY). Positions 1326–1337 (QQKEPSVDERQG) are enriched in basic and acidic residues. WD repeat units lie at residues 1420 to 1471 (EHND…TLSI), 1475 to 1516 (SHSK…KIAS), 1519 to 1558 (GHNQRIFVAEFRPDSDTQFVSVGIKHVKFWTLAGRALLSK), 1568 to 1606 (ARMQTMLAVAFGANNLTFTGTISGDVCVWKDHILCRVVA), 1608 to 1654 (AHNG…RAFR), 1699 to 1739 (GHVD…MLNK), 1741 to 1782 (NLGH…GKKR), 1783 to 1822 (DRRCAIHDIRFSPDSRYLAVGSSENSVDFYDLTLGPTLNR), 1895 to 1934 (AEKADVTCACVSHSGISLVTGDDFGMVKLYDFPCPEKFAK), and 1940 to 1977 (GHSPHVTNIRFTSGDRHVVSAGGDDCSVFVWKCVHTPH).

It belongs to the WD repeat EMAP family. Highly expressed in brain, especially in hippocampus, cerebellum and olfactory bulb (at protein level).

It is found in the cytoplasm. The protein resides in the cytoskeleton. May modify the assembly dynamics of microtubules, such that microtubules are slightly longer, but more dynamic. The sequence is that of Echinoderm microtubule-associated protein-like 5 (Eml5) from Rattus norvegicus (Rat).